The sequence spans 192 residues: Superoxide dismutase [Fe] (192 aa).

Positions 27, 74, 157, and 161 each coordinate Fe cation.

The protein belongs to the iron/manganese superoxide dismutase family. As to quaternary structure, homodimer. Fe cation serves as cofactor.

It catalyses the reaction 2 superoxide + 2 H(+) = H2O2 + O2. In terms of biological role, destroys superoxide anion radicals which are normally produced within the cells and which are toxic to biological systems. This Legionella pneumophila subsp. pneumophila (strain Philadelphia 1 / ATCC 33152 / DSM 7513) protein is Superoxide dismutase [Fe] (sodB).